Here is a 1170-residue protein sequence, read N- to C-terminus: Putative DNA topoisomerase 2, mitochondrial (1170 aa).

Residues Asn-106, Asn-135, 163–165 (SSN), 176–183 (GRNGYGAK), and 396–398 (QTK) contribute to the ATP site. Positions 475–590 (CTLILTEGDS…SLVHTDGFIQ (116 aa)) constitute a Toprim domain. The Mg(2+) site is built by Glu-481, Asp-559, and Asp-561. Positions 722 to 1157 (IPSLIDGLKP…DWKSVWRSEL (436 aa)) constitute a Topo IIA-type catalytic domain. Catalysis depends on Tyr-813, which acts as the O-(5'-phospho-DNA)-tyrosine intermediate.

Belongs to the type II topoisomerase family. In terms of assembly, homodimer. The cofactor is Mg(2+). Mn(2+) is required as a cofactor. Ca(2+) serves as cofactor.

The protein resides in the mitochondrion. The catalysed reaction is ATP-dependent breakage, passage and rejoining of double-stranded DNA.. In terms of biological role, control of topological states of DNA by transient breakage and subsequent rejoining of DNA strands. Topoisomerase II makes double-strand breaks. In Caenorhabditis elegans, this protein is Putative DNA topoisomerase 2, mitochondrial.